The primary structure comprises 280 residues: 4-deoxy-L-threo-5-hexosulose-uronate ketol-isomerase 1 (280 aa).

Zn(2+) is bound by residues His-198, His-200, Glu-205, and His-247.

This sequence belongs to the KduI family. Zn(2+) is required as a cofactor.

It carries out the reaction 5-dehydro-4-deoxy-D-glucuronate = 3-deoxy-D-glycero-2,5-hexodiulosonate. It participates in glycan metabolism; pectin degradation; 2-dehydro-3-deoxy-D-gluconate from pectin: step 4/5. Catalyzes the isomerization of 5-dehydro-4-deoxy-D-glucuronate to 3-deoxy-D-glycero-2,5-hexodiulosonate. This Bacteroides thetaiotaomicron (strain ATCC 29148 / DSM 2079 / JCM 5827 / CCUG 10774 / NCTC 10582 / VPI-5482 / E50) protein is 4-deoxy-L-threo-5-hexosulose-uronate ketol-isomerase 1 (kduI1).